The sequence spans 563 residues: BOS complex subunit NCLN (563 aa).

The signal sequence occupies residues 1 to 42; that stretch reads MLEEAGEVLENMLKASCLPLGFIVFLPAVLLLVAPPLPAADA. Topologically, residues 43–522 are lumenal; the sequence is AHEFTVYRMQ…VMNAYRVKPA (480 aa). N-linked (GlcNAc...) asparagine glycans are attached at residues Asn-241 and Asn-428. The chain crosses the membrane as a helical span at residues 523–543; that stretch reads VFDLLLAVGIAAYLGMAYVAV. Over 544–563 the chain is Cytoplasmic; it reads QHFSLLYKTVQRLLVKAKTQ.

This sequence belongs to the nicastrin family. As to quaternary structure, component of the back of Sec61 (BOS) complex, composed of NCLN/Nicalin, NOMO (NOMO1, NOMO2 or NOMO3) and TMEM147. The BOS complex is part of the multi-pass translocon (MPT) complex, composed of three subcomplexes, the GEL complex (composed of RAB5IF/OPTI and TMCO1), the BOS complex (composed of NCLN/Nicalin, NOMO and TMEM147) and the PAT complex (composed of WDR83OS/Asterix and CCDC47). The MPT complex associates with the SEC61 complex. Highly expressed in pancreas and skeletal muscle and, at lower levels, in heart.

Its subcellular location is the endoplasmic reticulum membrane. Functionally, component of the multi-pass translocon (MPT) complex that mediates insertion of multi-pass membrane proteins into the lipid bilayer of membranes. The MPT complex takes over after the SEC61 complex: following membrane insertion of the first few transmembrane segments of proteins by the SEC61 complex, the MPT complex occludes the lateral gate of the SEC61 complex to promote insertion of subsequent transmembrane regions. May antagonize Nodal signaling and subsequent organization of axial structures during mesodermal patterning, via its interaction with NOMO. The protein is BOS complex subunit NCLN of Homo sapiens (Human).